The sequence spans 296 residues: Methylsterol monooxygenase erg25B (296 aa).

3 helical membrane passes run 50–70, 98–118, and 125–145; these read IMSFVMHEIVYFGRSVPWILI, FVLLSHFTVELPQIWLFHPMA, and TSVPFPSVWTMMYQIAIFFVL. Positions 140-276 constitute a Fatty acid hydroxylase domain; sequence AIFFVLEDTW…FRWWDYLLDT (137 aa). Residues 154–158 carry the Histidine box-1 motif; the sequence is HRALH. The Histidine box-2 signature appears at 167–171; it reads HKIHH. A helical transmembrane segment spans residues 201–221; it reads ILWCALTGDLHIFTMYVWIVL. The Histidine box-3 motif lies at 251-257; the sequence is HHDLHHE.

It belongs to the sterol desaturase family. It depends on Fe cation as a cofactor.

The protein localises to the endoplasmic reticulum membrane. It participates in steroid metabolism; ergosterol biosynthesis. Its function is as follows. Sterol-C4-methyl oxidase; part of the third module of ergosterol biosynthesis pathway that includes the late steps of the pathway. Erg25B is a catalytic component of the C-4 demethylation complex that catalyzes the conversion of 4,4-dimethylfecosterol into fecosterol via 4-methylfecosterol. The third module or late pathway involves the ergosterol synthesis itself through consecutive reactions that mainly occur in the endoplasmic reticulum (ER) membrane. Firstly, the squalene synthase erg9 catalyzes the condensation of 2 farnesyl pyrophosphate moieties to form squalene, which is the precursor of all steroids. Squalene synthase is crucial for balancing the incorporation of farnesyl diphosphate (FPP) into sterol and nonsterol isoprene synthesis. Secondly, squalene is converted into lanosterol by the consecutive action of the squalene epoxidase erg1 and the lanosterol synthase erg7. Then, the delta(24)-sterol C-methyltransferase erg6 methylates lanosterol at C-24 to produce eburicol. Eburicol is the substrate of the sterol 14-alpha demethylase encoded by cyp51A and cyp51B, to yield 4,4,24-trimethyl ergosta-8,14,24(28)-trienol. The C-14 reductase erg24 then reduces the C14=C15 double bond which leads to 4,4-dimethylfecosterol. A sequence of further demethylations at C-4, involving the C-4 demethylation complex containing the C-4 methylsterol oxidases erg25A or erg25B, the sterol-4-alpha-carboxylate 3-dehydrogenase erg26 and the 3-keto-steroid reductase erg27, leads to the production of fecosterol via 4-methylfecosterol. The C-8 sterol isomerase erg2 then catalyzes the reaction which results in unsaturation at C-7 in the B ring of sterols and thus converts fecosterol to episterol. The sterol-C5-desaturase erg3B then catalyzes the introduction of a C-5 double bond in the B ring to produce 5-dehydroepisterol. The 2 other sterol-C5-desaturases, erg3A and erg3C, seem to be less important in ergosterol biosynthesis. The C-22 sterol desaturase erg5 further converts 5-dehydroepisterol into ergosta-5,7,22,24(28)-tetraen-3beta-ol by forming the C-22(23) double bond in the sterol side chain. Finally, ergosta-5,7,22,24(28)-tetraen-3beta-ol is substrate of the C-24(28) sterol reductases erg4A and erg4B to produce ergosterol. Possible alternative sterol biosynthetic pathways might exist from fecosterol to ergosterol, depending on the activities of the erg3 isoforms. In Aspergillus fumigatus (strain ATCC MYA-4609 / CBS 101355 / FGSC A1100 / Af293) (Neosartorya fumigata), this protein is Methylsterol monooxygenase erg25B.